Here is a 439-residue protein sequence, read N- to C-terminus: Ribosomal protein uS12 methylthiotransferase RimO (439 aa).

Positions 7–119 (KQLCLISLGC…IDILIAKKQN (113 aa)) constitute an MTTase N-terminal domain. Positions 16, 50, 82, 151, 155, and 158 each coordinate [4Fe-4S] cluster. Residues 137-368 (TGSSVHAYVK…ALKHQNHSFK (232 aa)) enclose the Radical SAM core domain.

The protein belongs to the methylthiotransferase family. RimO subfamily. The cofactor is [4Fe-4S] cluster.

The protein resides in the cytoplasm. The catalysed reaction is L-aspartate(89)-[ribosomal protein uS12]-hydrogen + (sulfur carrier)-SH + AH2 + 2 S-adenosyl-L-methionine = 3-methylsulfanyl-L-aspartate(89)-[ribosomal protein uS12]-hydrogen + (sulfur carrier)-H + 5'-deoxyadenosine + L-methionine + A + S-adenosyl-L-homocysteine + 2 H(+). Its function is as follows. Catalyzes the methylthiolation of an aspartic acid residue of ribosomal protein uS12. The sequence is that of Ribosomal protein uS12 methylthiotransferase RimO from Helicobacter pylori (strain J99 / ATCC 700824) (Campylobacter pylori J99).